Here is a 288-residue protein sequence, read N- to C-terminus: Diaminopimelate epimerase (288 aa).

Asparagine 14 and asparagine 67 together coordinate substrate. The active-site Proton donor is the cysteine 76. Substrate-binding positions include 77–78 (GN), asparagine 166, asparagine 199, and 217–218 (ER). The Proton acceptor role is filled by cysteine 226. A substrate-binding site is contributed by 227 to 228 (GT).

This sequence belongs to the diaminopimelate epimerase family. Homodimer.

It is found in the cytoplasm. The catalysed reaction is (2S,6S)-2,6-diaminopimelate = meso-2,6-diaminopimelate. Its pathway is amino-acid biosynthesis; L-lysine biosynthesis via DAP pathway; DL-2,6-diaminopimelate from LL-2,6-diaminopimelate: step 1/1. In terms of biological role, catalyzes the stereoinversion of LL-2,6-diaminopimelate (L,L-DAP) to meso-diaminopimelate (meso-DAP), a precursor of L-lysine and an essential component of the bacterial peptidoglycan. The chain is Diaminopimelate epimerase from Bacillus cereus (strain ATCC 10987 / NRS 248).